An 882-amino-acid chain; its full sequence is Valine--tRNA ligase (882 aa).

The 'HIGH' region motif lies at 45 to 55; sequence PNVTGKLHLGH. Residues 519 to 523 carry the 'KMSKS' region motif; it reads KMSKS. K522 provides a ligand contact to ATP. Residues 808-882 adopt a coiled-coil conformation; it reads LADLLNVEEE…RIAEMKKIKS (75 aa).

Belongs to the class-I aminoacyl-tRNA synthetase family. ValS type 1 subfamily. Monomer.

It is found in the cytoplasm. It catalyses the reaction tRNA(Val) + L-valine + ATP = L-valyl-tRNA(Val) + AMP + diphosphate. Functionally, catalyzes the attachment of valine to tRNA(Val). As ValRS can inadvertently accommodate and process structurally similar amino acids such as threonine, to avoid such errors, it has a 'posttransfer' editing activity that hydrolyzes mischarged Thr-tRNA(Val) in a tRNA-dependent manner. The protein is Valine--tRNA ligase of Streptococcus pyogenes serotype M28 (strain MGAS6180).